The following is a 64-amino-acid chain: Large ribosomal subunit protein bL35 (64 aa).

The segment at 1 to 43 (MPKMKSKKSLAKRVIAKKNGTLKRGKAYRSHRATGKTTKQKRH) is disordered.

This sequence belongs to the bacterial ribosomal protein bL35 family.

This chain is Large ribosomal subunit protein bL35, found in Mesoplasma florum (strain ATCC 33453 / NBRC 100688 / NCTC 11704 / L1) (Acholeplasma florum).